The sequence spans 292 residues: Complex I assembly factor TIMMDC1, mitochondrial (292 aa).

2 helical membrane passes run 146 to 168 (WSWRVAAFVTLFNTVNTGLTVYR) and 195 to 215 (GLLSGTIIGVILGFPAGVLIL).

It belongs to the Tim17/Tim22/Tim23 family. Associates with the intermediate 315 kDa subcomplex of incompletely assembled complex I.

It localises to the mitochondrion membrane. Its function is as follows. Chaperone protein involved in the assembly of the mitochondrial NADH:ubiquinone oxidoreductase complex (complex I). Participates in constructing the membrane arm of complex I. The polypeptide is Complex I assembly factor TIMMDC1, mitochondrial (timmdc1) (Danio rerio (Zebrafish)).